The following is a 226-amino-acid chain: N-acetylmuramic acid 6-phosphate phosphatase (226 aa).

The Nucleophile role is filled by aspartate 12. Mg(2+) contacts are provided by aspartate 12, aspartate 14, and aspartate 171. The active-site Proton donor is aspartate 14.

It belongs to the HAD-like hydrolase superfamily. CbbY/CbbZ/Gph/YieH family. Phosphatase MupP subfamily. Mg(2+) serves as cofactor.

The catalysed reaction is N-acetyl-D-muramate 6-phosphate + H2O = N-acetyl-D-muramate + phosphate. The protein operates within cell wall biogenesis; peptidoglycan recycling. Its function is as follows. Specifically catalyzes the dephosphorylation of N-acetylmuramate 6-phosphate (MurNAc-6P) to MurNac. Is involved in peptidoglycan recycling as part of a cell wall recycling pathway that bypasses de novo biosynthesis of the peptidoglycan precursor UDP-MurNAc. Plays a role in intrinsic resistance to fosfomycin, which targets the de novo synthesis of UDP-MurNAc. The protein is N-acetylmuramic acid 6-phosphate phosphatase of Pseudomonas aeruginosa (strain ATCC 15692 / DSM 22644 / CIP 104116 / JCM 14847 / LMG 12228 / 1C / PRS 101 / PAO1).